The primary structure comprises 538 residues: Lipid scramblase CLPTM1L (538 aa).

The Cytoplasmic segment spans residues 1–10 (MWSGRSSFTS). A helical transmembrane segment spans residues 11 to 31 (LVVGVFVVYVVHTCWVMYGIV). At 32–284 (YTRPCSGDAN…VKGIFVDTNL (253 aa)) the chain is on the extracellular side. N-linked (GlcNAc...) asparagine glycosylation is found at asparagine 91 and asparagine 101. A helical membrane pass occupies residues 285–305 (YFLALTFFVAAFHLLFDFLAF). At 306–324 (KNDISFWKKKKSMIGMSTK) the chain is on the cytoplasmic side. A helical transmembrane segment spans residues 325-342 (AVLWRCFSTVVIFLFLLD). The Extracellular portion of the chain corresponds to 343–346 (EQTS). A helical membrane pass occupies residues 347–364 (LLVLVPAGVGAAIELWKV). At 365–402 (KKALKMTILWRGLMPEFELGTYSESERKTEEYDTQAMK) the chain is on the cytoplasmic side. A helical membrane pass occupies residues 403–423 (YLSYLLYPLCVGGAVYSLLNI). Over 424–428 (KYKSW) the chain is Extracellular. A helical membrane pass occupies residues 429 to 449 (YSWLINSFVNGVYAFGFLFML). Topologically, residues 450-538 (PQLFVNYKLK…EKAARAPHTD (89 aa)) are cytoplasmic.

It belongs to the CLPTM1 family.

The protein resides in the endoplasmic reticulum membrane. The enzyme catalyses a 6-(alpha-D-glucosaminyl)-1-(1,2-diacyl-sn-glycero-3-phospho)-1D-myo-inositol(in) = a 6-(alpha-D-glucosaminyl)-1-(1,2-diacyl-sn-glycero-3-phospho)-1D-myo-inositol(out). It catalyses the reaction 6-(alpha-D-glucosaminyl)-(1-octadecanoyl,2-(9Z)-octadecenoyl-sn-glycero-3-phospho)-1D-myo-inositol(in) = 6-(alpha-D-glucosaminyl)-(1-octadecanoyl,2-(9Z)-octadecenoyl-sn-glycero-3-phospho)-1D-myo-inositol(out). It carries out the reaction a 1,2-diacyl-sn-glycero-3-phospho-(1D-myo-inositol)(in) = a 1,2-diacyl-sn-glycero-3-phospho-(1D-myo-inositol)(out). The catalysed reaction is a 1,2-diacyl-sn-glycero-3-phosphocholine(in) = a 1,2-diacyl-sn-glycero-3-phosphocholine(out). The enzyme catalyses a 1,2-diacyl-sn-glycero-3-phosphoethanolamine(in) = a 1,2-diacyl-sn-glycero-3-phosphoethanolamine(out). Functionally, scramblase that mediates the translocation of glucosaminylphosphatidylinositol (alpha-D-GlcN-(1-6)-(1,2-diacyl-sn-glycero-3-phospho)-1D-myo-inositol, GlcN-PI) across the endoplasmic reticulum (ER) membrane, from the cytosolic leaflet to the luminal leaflet of the ER membrane, where it participates in the biosynthesis of glycosylphosphatidylinositol (GPI). GPI is a lipid glycoconjugate involved in post-translational modification of proteins. Can also translocate 1,2-diacyl-sn-glycero-3-phospho-(1D-myo-inositol) (phosphatidylinositol or PI), as well as several other phospholipids (1,2-diacyl-sn-glycero-3-phosphocholine, 1,2-diacyl-sn-glycero-3-phosphoethanolamine), and N-acetylglucosaminylphosphatidylinositol (GlcNAc-PI) in vitro. This chain is Lipid scramblase CLPTM1L (CLPTM1L), found in Pongo abelii (Sumatran orangutan).